We begin with the raw amino-acid sequence, 514 residues long: MENLSERFNALQDQLMNIYEAAEQTLQAQIKHWQTLRKEPVLLYYAREKGVTRLGYQPVPVKAVSETKAKEAIAMVLQLESLQTSDFAHEPWTLVDTSIETFRSAPEGHFKKGPLPVEVIYDNDPDNANLYTMWTYVYYMDADDKWHKARSGVNHIGIYYLQGTFKNYYVLFADDAKRYGTTGEWEVKVNKETVFAPVTSSTPPGSPGGQADTNTTPATPTTSTTAVDSTSRQLTTSKQPQQTETRGRRYGRRPSSKSRRSQTQQRRSRSRHRSRSRSRSRSKSQTHTTRSTTRSRSTSLTKTRALTSRSRSRGRSPTTCRRGGGRSPRRRSRSPSTSSSCTTQRSQRARAESSTTRGARGSRGSRGGSRGGRGRRRGRSSSSSSPAHKRSRGGSAKLRGVSPGEVGGSLRSVSSKHTGRLGRLLEEARDPPVIIVKGAANTLKNVRNRAKIKYMGLFRSFSTTWSWVAGDGTERLGRPRMLISFSSYTQRRDFDEAVRYPKGVDKAYGNLDSL.

The segment at Met-1 to Ser-201 is transactivation domain. A disordered region spans residues Pro-197–Leu-424. Residues Thr-199 to Ser-231 are compositionally biased toward low complexity. Over residues Arg-232–Glu-244 the composition is skewed to polar residues. Residues Arg-248–Ser-284 show a composition bias toward basic residues. The segment covering Gln-285 to Arg-321 has biased composition (low complexity). Over residues Gly-323–Arg-333 the composition is skewed to basic residues. Residues Ser-334–Ser-346 are compositionally biased toward low complexity. The segment at Asp-430 to Leu-514 is DNA-binding domain. Residue Lys-437 forms a Glycyl lysine isopeptide (Lys-Gly) (interchain with G-Cter in SUMO) linkage.

This sequence belongs to the papillomaviridae E2 protein family. As to quaternary structure, binds DNA as homodimer. Interacts with protein E1; this interaction greatly increases E1 DNA-binding activity. Interacts with protein L1; this interaction enhances E2-dependent replication and transcription activation. Interacts with protein L2; this interaction inhibits E2 transcriptional activity but not DNA replication function E2. Interacts with protein E7; this interaction inhibits E7 oncogenic activity. Interacts with host TAF1; this interaction modulates E2-dependent transcriptional regulation. Interacts with host BRD4; this interaction mediates E2 transcriptional activation function. Additionally, the interaction with host BRD4 on mitotic chromosomes mediates tethering of the viral genome. Interacts with host TOPBP1; this interaction is required for optimal viral DNA replication. Phosphorylated. In terms of processing, sumoylation plays a regulatory role in E2 transcriptional activity.

It is found in the host nucleus. Functionally, plays a role in the initiation of viral DNA replication. A dimer of E2 interacts with a dimer of E1 in order to improve specificity of E1 DNA binding activity. Once the complex recognizes and binds DNA at specific sites, the E2 dimer is removed from DNA. E2 also regulates viral transcription through binding to the E2RE response element (5'-ACCNNNNNNGGT-3') present in multiple copies in the regulatory regions of the viral genome. Activates or represses transcription depending on E2RE's position with regards to proximal promoter elements including the TATA-box. Repression occurs by sterically hindering the assembly of the transcription initiation complex. This chain is Regulatory protein E2, found in Homo sapiens (Human).